Here is a 208-residue protein sequence, read N- to C-terminus: Ras-related protein RABH1b (208 aa).

16 to 23 (GDQSVGKT) serves as a coordination point for GTP. Residues 38–46 (YQATIGIDF) carry the Effector region motif. GTP is bound by residues 64-68 (DTAGQ), 122-125 (NKTD), and 152-153 (SA). Residues Cys-206 and Cys-208 are each lipidated (S-geranylgeranyl cysteine). Cysteine methyl ester is present on Cys-208.

It belongs to the small GTPase superfamily. Rab family. Interacts with the C-terminus of GC5, but not with GC3. Expressed in roots, stems, leaves and flowers.

It localises to the golgi apparatus membrane. The protein localises to the cytoplasm. It is found in the cytosol. Functionally, protein transport. Regulator of membrane traffic from the Golgi apparatus towards the endoplasmic reticulum (ER). Binds GTP and GDP and possesses intrinsic GTPase activity. This chain is Ras-related protein RABH1b (RABH1B), found in Arabidopsis thaliana (Mouse-ear cress).